A 212-amino-acid chain; its full sequence is Holliday junction branch migration complex subunit RuvA (212 aa).

Positions 1–63 (MIAKLKGLID…EDAISLFGFL (63 aa)) are domain I. Residues 64-142 (ETGERDWFRL…KIALGGFSPG (79 aa)) are domain II. The tract at residues 143 to 155 (GIKDALSASAPLP) is flexible linker. Residues 156–212 (AASGRMEDAVSALVNLGYKRLEAFQAVGETARELGDEADSSALIRAALKHLGKGLLG) are domain III.

Belongs to the RuvA family. Homotetramer. Forms an RuvA(8)-RuvB(12)-Holliday junction (HJ) complex. HJ DNA is sandwiched between 2 RuvA tetramers; dsDNA enters through RuvA and exits via RuvB. An RuvB hexamer assembles on each DNA strand where it exits the tetramer. Each RuvB hexamer is contacted by two RuvA subunits (via domain III) on 2 adjacent RuvB subunits; this complex drives branch migration. In the full resolvosome a probable DNA-RuvA(4)-RuvB(12)-RuvC(2) complex forms which resolves the HJ.

It is found in the cytoplasm. Functionally, the RuvA-RuvB-RuvC complex processes Holliday junction (HJ) DNA during genetic recombination and DNA repair, while the RuvA-RuvB complex plays an important role in the rescue of blocked DNA replication forks via replication fork reversal (RFR). RuvA specifically binds to HJ cruciform DNA, conferring on it an open structure. The RuvB hexamer acts as an ATP-dependent pump, pulling dsDNA into and through the RuvAB complex. HJ branch migration allows RuvC to scan DNA until it finds its consensus sequence, where it cleaves and resolves the cruciform DNA. The protein is Holliday junction branch migration complex subunit RuvA of Paramagnetospirillum magneticum (strain ATCC 700264 / AMB-1) (Magnetospirillum magneticum).